The following is a 72-amino-acid chain: Mu-like prophage FluMu protein C (72 aa).

The H-T-H motif DNA-binding region spans 35 to 55; that stretch reads NVPDLIKKYRLSESTIYAILR.

It belongs to the c/mor transcriptional regulatory family.

Required for transcription of the phage late genes. The polypeptide is Mu-like prophage FluMu protein C (Haemophilus influenzae (strain ATCC 51907 / DSM 11121 / KW20 / Rd)).